We begin with the raw amino-acid sequence, 545 residues long: Chaperonin GroEL (545 aa).

Residues 29 to 32 (TMGP), K50, 86 to 90 (DGTTT), G414, 477 to 479 (NAA), and D493 each bind ATP.

This sequence belongs to the chaperonin (HSP60) family. In terms of assembly, forms a cylinder of 14 subunits composed of two heptameric rings stacked back-to-back. Interacts with the co-chaperonin GroES.

The protein resides in the cytoplasm. It carries out the reaction ATP + H2O + a folded polypeptide = ADP + phosphate + an unfolded polypeptide.. Together with its co-chaperonin GroES, plays an essential role in assisting protein folding. The GroEL-GroES system forms a nano-cage that allows encapsulation of the non-native substrate proteins and provides a physical environment optimized to promote and accelerate protein folding. The protein is Chaperonin GroEL of Campylobacter fetus subsp. fetus (strain 82-40).